Consider the following 191-residue polypeptide: Surfactant protein C (191 aa).

Residues 1-23 (MDVGSKEVLMESPPDYSAAPRGR) constitute a propeptide that is removed on maturation. 2 S-palmitoyl cysteine lipidation sites follow: Cys28 and Cys29. Positions 59-191 (HMSQKHTEMV…LCGEVPLYYI (133 aa)) are excised as a propeptide. The BRICHOS domain occupies 94-191 (FSFGSTGLVV…LCGEVPLYYI (98 aa)). Cys121 and Cys183 form a disulfide bridge.

The protein localises to the secreted. It is found in the extracellular space. Its subcellular location is the surface film. Pulmonary surfactant associated proteins promote alveolar stability by lowering the surface tension at the air-liquid interface in the peripheral air spaces. The chain is Surfactant protein C (SFTPC) from Macaca mulatta (Rhesus macaque).